The primary structure comprises 113 residues: MAGHRKLGLPTDQRRAMLRNLVTSLLKHGKIETTETRAKETRSIAEKMITLGKRGDLHARRQVLSYVQEELVVKNLFDNVAPKYTERNGGYTRIIKKGPRRGDGAEIVILELV.

This sequence belongs to the bacterial ribosomal protein bL17 family. In terms of assembly, part of the 50S ribosomal subunit. Contacts protein L32.

The chain is Large ribosomal subunit protein bL17 from Clostridium beijerinckii (strain ATCC 51743 / NCIMB 8052) (Clostridium acetobutylicum).